The primary structure comprises 205 residues: Large ribosomal subunit protein uL10 (205 aa).

Positions 167–205 (AQGAAPAEAKAEAPASEEKAADTPAEQPAESAPEAAPEA) are disordered. Composition is skewed to low complexity over residues 169 to 180 (GAAPAEAKAEAP) and 190 to 205 (PAEQ…APEA).

The protein belongs to the universal ribosomal protein uL10 family. In terms of assembly, part of the ribosomal stalk of the 50S ribosomal subunit. The N-terminus interacts with L11 and the large rRNA to form the base of the stalk. The C-terminus forms an elongated spine to which L12 dimers bind in a sequential fashion forming a multimeric L10(L12)X complex.

Forms part of the ribosomal stalk, playing a central role in the interaction of the ribosome with GTP-bound translation factors. The chain is Large ribosomal subunit protein uL10 from Treponema denticola (strain ATCC 35405 / DSM 14222 / CIP 103919 / JCM 8153 / KCTC 15104).